Consider the following 253-residue polypeptide: tRNA 2'-phosphotransferase 1 (253 aa).

Met-1 carries the post-translational modification N-acetylmethionine. Disordered stretches follow at residues 1–29 and 225–253; these read MNFSGGGRQEAAGSRGRRAPRPREQDRDV and KPLSLAGDEETECQSSPKHSSRERRRIQQ. A Phosphoserine modification is found at Ser-240. Basic residues predominate over residues 243 to 253; the sequence is HSSRERRRIQQ.

It belongs to the KptA/TPT1 family. As to expression, widely expressed. Weakly or not expressed in lung, spleen, small intestine and peripheral blood leukocytes.

The catalysed reaction is 2'-phospho-[ligated tRNA] + NAD(+) = mature tRNA + ADP-alpha-D-ribose 1'',2''-cyclic phosphate + nicotinamide. Functionally, catalyzes the last step of tRNA splicing, the transfer of the splice junction 2'-phosphate from ligated tRNA to NAD to produce ADP-ribose 1''-2'' cyclic phosphate. This is tRNA 2'-phosphotransferase 1 (TRPT1) from Homo sapiens (Human).